The sequence spans 656 residues: Methylenetetrahydrofolate reductase (NADPH) (656 aa).

The tract at residues 1 to 46 (MVNEARGNDSLNPCLEGSASSSSESSKDSSRCSTPGLDPERHERLR) is disordered. Phosphoserine occurs at positions 10, 18, 20, 21, 23, 25, 26, 29, and 30. Thr34 bears the Phosphothreonine mark. The active-site Proton donor/acceptor is the Glu63. NAD(+)-binding positions include 63 to 68 (EFFPPR) and 94 to 95 (TW). Thr94 carries the post-translational modification Phosphothreonine. 94 to 95 (TW) serves as a coordination point for FAD. The residue at position 103 (Ser103) is a Phosphoserine. Residues His127, 157-159 (RGD), 174-175 (YA), Tyr197, 201-204 (HPEA), Asp210, and Lys217 each bind FAD. Asp159 is a substrate binding site. 3 residues coordinate substrate: Gln228, Tyr321, and Arg325. Ser394 carries the phosphoserine modification. Thr451 carries the phosphothreonine modification. S-adenosyl-L-methionine contacts are provided by residues Asn456, 461 to 464 (AAET), 481 to 485 (TINSQ), Thr560, and Thr573.

This sequence belongs to the methylenetetrahydrofolate reductase family. Homodimer. FAD serves as cofactor. In terms of processing, phosphorylation of an N-terminal serine-rich phosphorylation region increases sensitivity to S-adenosylmethionine and inhibition.

It carries out the reaction (6S)-5-methyl-5,6,7,8-tetrahydrofolate + NADP(+) = (6R)-5,10-methylene-5,6,7,8-tetrahydrofolate + NADPH + H(+). It participates in one-carbon metabolism; tetrahydrofolate interconversion. With respect to regulation, allosterically regulated by S-adenosylmethionine (SAM). Its function is as follows. Catalyzes the conversion of 5,10-methylenetetrahydrofolate to 5-methyltetrahydrofolate, a cosubstrate for homocysteine remethylation to methionine. Represents a key regulatory connection between the folate and methionine cycles. In Macaca fascicularis (Crab-eating macaque), this protein is Methylenetetrahydrofolate reductase (NADPH) (MTHFR).